The chain runs to 198 residues: Recombination protein RecR (198 aa).

Residues 57–72 (CSVCGHITDKDPCYIC) form a C4-type zinc finger. Residues 80 to 175 (SVICVVQESK…KVTRIAHGLP (96 aa)) form the Toprim domain.

This sequence belongs to the RecR family.

May play a role in DNA repair. It seems to be involved in an RecBC-independent recombinational process of DNA repair. It may act with RecF and RecO. The polypeptide is Recombination protein RecR (Listeria welshimeri serovar 6b (strain ATCC 35897 / DSM 20650 / CCUG 15529 / CIP 8149 / NCTC 11857 / SLCC 5334 / V8)).